The sequence spans 380 residues: MAPNIRKSHPLLKMINNSLIDLPTPPNISAWWNFGSLLAMCLITQILTGLLLAMHYTADTSLAFSSVAHTCRNVQYGWLIRNLHANGASFFFICIFLHIGRGLYYGSYLYKETWNTGVILLLTLMATAFVGYVLPWGQMSFWGATVITNLFSAVPYIGQTLVEWAWGGFSVDNPTLTRFFALHFLLPFLIAGITIIHLTFLHESGSNNPLGISSDSDKIPFHPYYSIKDILGLTLMLTPFLTLALFSPNFLGDPENFTPANPLVTPPHIKPEWYFLFAYAILRSIPNKLGGVLALAASVLILLLIPFLHKSKQRTMTFRPLSQTLFWLLVANLLILTWIGSQPVEHPFIIIGQMASLSYFTILLILFPMIGMLENKMLNH.

A run of 4 helical transmembrane segments spans residues 34–54, 78–99, 114–134, and 179–199; these read FGSL…LLAM, WLIR…FLHI, WNTG…GYVL, and FFAL…IHLT. Residues His-84 and His-98 each coordinate heme b. His-183 and His-197 together coordinate heme b. An a ubiquinone-binding site is contributed by His-202. The next 4 membrane-spanning stretches (helical) occupy residues 227-247, 289-309, 321-341, and 348-368; these read IKDI…ALFS, LGGV…PFLH, LSQT…WIGS, and FIII…ILFP.

The protein belongs to the cytochrome b family. As to quaternary structure, the cytochrome bc1 complex contains 11 subunits: 3 respiratory subunits (MT-CYB, CYC1 and UQCRFS1), 2 core proteins (UQCRC1 and UQCRC2) and 6 low-molecular weight proteins (UQCRH/QCR6, UQCRB/QCR7, UQCRQ/QCR8, UQCR10/QCR9, UQCR11/QCR10 and a cleavage product of UQCRFS1). This cytochrome bc1 complex then forms a dimer. Heme b is required as a cofactor.

It localises to the mitochondrion inner membrane. Functionally, component of the ubiquinol-cytochrome c reductase complex (complex III or cytochrome b-c1 complex) that is part of the mitochondrial respiratory chain. The b-c1 complex mediates electron transfer from ubiquinol to cytochrome c. Contributes to the generation of a proton gradient across the mitochondrial membrane that is then used for ATP synthesis. In Coturnix japonica (Japanese quail), this protein is Cytochrome b (MT-CYB).